The sequence spans 207 residues: Large ribosomal subunit protein bL25 (207 aa).

Positions 1–20 are disordered; that stretch reads MANHQIKAQRRKDEGKGASR.

Belongs to the bacterial ribosomal protein bL25 family. CTC subfamily. Part of the 50S ribosomal subunit; part of the 5S rRNA/L5/L18/L25 subcomplex. Contacts the 5S rRNA. Binds to the 5S rRNA independently of L5 and L18.

In terms of biological role, this is one of the proteins that binds to the 5S RNA in the ribosome where it forms part of the central protuberance. This Xylella fastidiosa (strain M23) protein is Large ribosomal subunit protein bL25.